The primary structure comprises 87 residues: Cytochrome c6 (87 aa).

Positions 14, 17, 18, and 58 each coordinate heme c.

The protein belongs to the cytochrome c family. PetJ subfamily. In terms of assembly, monomer. Binds 1 heme c group covalently per subunit.

It localises to the cellular thylakoid lumen. Its function is as follows. Functions as an electron carrier between membrane-bound cytochrome b6-f and photosystem I in oxygenic photosynthesis. The chain is Cytochrome c6 (petJ) from Aphanizomenon flos-aquae.